Reading from the N-terminus, the 931-residue chain is Myocardin-related transcription factor A (931 aa).

The interval 1–256 (MPPLKSPAAF…KQDRGAPPMD (256 aa)) is mediates interaction with SCAI and ACTB. Phosphoserine is present on Ser6. Residues 6–23 (SPAAFHEQRRSLERARTE) are intervening spacer sequence 1. One copy of the RPEL 1 repeat lies at 24 to 49 (DYLKRKIRSRPERSELVRMHILEETS). The Bipartite Nuclear localization signal signature appears at 27–65 (KRKIRSRPERSELVRMHILEETSAEPSLQAKQLKLKRAR). The segment at 50–67 (AEPSLQAKQLKLKRARLA) is intervening spacer sequence 2. An RPEL 2 repeat occupies 68–93 (DDLNEKIAQRPGPMELVEKNILPVES). Disordered regions lie at residues 110–256 (ADSS…PPMD) and 290–344 (PAPP…GALP). A phosphoserine mark is found at Ser124, Ser139, and Ser156. Over residues 151–162 (SATSASPTQVVS) the composition is skewed to polar residues. The segment covering 180–189 (PPLPPPPLLP) has biased composition (pro residues). Residues 191 to 215 (SLTNGTTIPTAKSTPTLIKQSQPKS) are compositionally biased toward polar residues. Residues 216-231 (ASEKSQRSKKAKELKP) are compositionally biased toward basic and acidic residues. Thr305 is modified (phosphothreonine). Residues Ser310 and Ser312 each carry the phosphoserine modification. Low complexity predominate over residues 310-320 (SLSTTNSSSSS). Phosphothreonine is present on Thr313. Ser317, Ser320, and Ser333 each carry phosphoserine. The SAP domain maps to 347 to 381 (LDDMKVAELKQELKLRSLPVSGTKTELIERLRAYQ). Phosphoserine is present on residues Ser385 and Ser446. The tract at residues 444 to 476 (FGSTGSTPPVSPTPSERSLLSTGDENSTPGDTF) is disordered. Thr447 is modified (phosphothreonine). Ser449 carries the post-translational modification Phosphoserine. Thr450 carries the phosphothreonine modification. Ser454 bears the Phosphoserine mark. Thr456 carries the post-translational modification Phosphothreonine. Ser458 bears the Phosphoserine mark. Residues 459 to 473 (ERSLLSTGDENSTPG) are compositionally biased toward polar residues. 4 positions are modified to phosphoserine: Ser482, Ser492, Ser507, and Ser511. Residues 515 to 563 (RAELEGRDKDQMLQEKDKQIEALTRMLRQKQQLVERLKLQLEQEKRAQQ) adopt a coiled-coil conformation. Disordered stretches follow at residues 558 to 577 (EKRA…PVKQ), 674 to 746 (KNAD…SSSQ), and 763 to 816 (ADFK…RLED). The segment covering 678–694 (SPGLSSGSPQQPSSQPG) has biased composition (low complexity). Residues Ser685, Ser691, and Ser695 each carry the phosphoserine modification. Residues 732-746 (MSQQPKQQENGSSSQ) are compositionally biased toward polar residues. Residues 763-778 (ADFKEPPSLPGKEKPS) show a composition bias toward basic and acidic residues. The span at 784-799 (GSPLAAQPSPSAELPQ) shows a compositional bias: low complexity. Residues Ser792, Ser807, and Ser859 each carry the phosphoserine modification.

As to quaternary structure, interacts with SRF, forming the SRF-MRTFA nuclear complex which binds the 5'-CArG-3' consensus motif (CArG box) on DNA via SRF. Interacts (via RPEL repeats) with globular actin (G-actin), thereby regulating its subcellular location and activity of the complex formed with SRF. Either forms a trivalent (by binding three G-actin monomers) or pentavalent (by binding five G-actin monomers) complex with G-actin. Forms a nuclear ternary complex with SCAI and SRF, leading to suppress MRTFA-induced SRF transcriptional activity. Interacts with beta-actin (ACTB); interaction with ACTB prevents interaction with SCAI. Interacts with MRTFB. In terms of processing, phosphorylation at Ser-6 by Erk inhibits binding of globular actin (G-actin), unmasking the nuclear localization signal (NLS) and promoting nuclear import. As to expression, ubiquitously expressed, has been detected in lung, placenta, small intestine, liver, kidney, spleen, thymus, colon, muscle, heart and brain. Expressed in peripheral blood mononuclear cells (at protein level).

The protein localises to the cytoplasm. The protein resides in the nucleus. Its function is as follows. Transcription coactivator that associates with the serum response factor (SRF) transcription factor to control expression of genes regulating the cytoskeleton during development, morphogenesis and cell migration. The SRF-MRTFA complex activity responds to Rho GTPase-induced changes in cellular globular actin (G-actin) concentration, thereby coupling cytoskeletal gene expression to cytoskeletal dynamics. MRTFA binds G-actin via its RPEL repeats, regulating activity of the MRTFA-SRF complex. Activity is also regulated by filamentous actin (F-actin) in the nucleus. In Homo sapiens (Human), this protein is Myocardin-related transcription factor A.